A 310-amino-acid chain; its full sequence is MDKENSSMVTEFIFMGITQDPQMEIIFFVVFLIVYLVNVVGNIGMIILITTDTQLHTPMYFFLCNLSFVDLGYSSAIAPRMLADFLTNHKVISFSSCATQFAFFVGFVDAECYVLAAMAYGRFVAICRPLHYSTFMSKQVCLALMLGSYLAGLVSLVAHTTLTFSLSYCGSNIINHFFCEIPPLLALSCSDTYISEILLFSLCGFIEFSTILIIFISYTFILVAIIRMRSAEGRLKAFSTCGSHLTGITLFYGTVMFMYLRPTSSYSLDQDKWASVFYTVIIPMLNPLIYSLRNKDVKAAFKKLIGKKSQ.

The Extracellular portion of the chain corresponds to 1–28 (MDKENSSMVTEFIFMGITQDPQMEIIFF). An N-linked (GlcNAc...) asparagine glycan is attached at asparagine 5. A helical transmembrane segment spans residues 29-49 (VVFLIVYLVNVVGNIGMIILI). Topologically, residues 50–58 (TTDTQLHTP) are cytoplasmic. Residues 59–79 (MYFFLCNLSFVDLGYSSAIAP) form a helical membrane-spanning segment. At 80-100 (RMLADFLTNHKVISFSSCATQ) the chain is on the extracellular side. Cysteine 97 and cysteine 189 are oxidised to a cystine. The chain crosses the membrane as a helical span at residues 101 to 120 (FAFFVGFVDAECYVLAAMAY). Over 121-139 (GRFVAICRPLHYSTFMSKQ) the chain is Cytoplasmic. Residues 140–160 (VCLALMLGSYLAGLVSLVAHT) traverse the membrane as a helical segment. The Extracellular portion of the chain corresponds to 161–205 (TLTFSLSYCGSNIINHFFCEIPPLLALSCSDTYISEILLFSLCGF). The chain crosses the membrane as a helical span at residues 206-226 (IEFSTILIIFISYTFILVAII). Residues 227 to 239 (RMRSAEGRLKAFS) are Cytoplasmic-facing. A helical transmembrane segment spans residues 240–260 (TCGSHLTGITLFYGTVMFMYL). The Extracellular portion of the chain corresponds to 261-271 (RPTSSYSLDQD). A helical membrane pass occupies residues 272–292 (KWASVFYTVIIPMLNPLIYSL). Residues 293–310 (RNKDVKAAFKKLIGKKSQ) are Cytoplasmic-facing.

It belongs to the G-protein coupled receptor 1 family.

It localises to the cell membrane. Odorant receptor. The chain is Olfactory receptor 5AR1 from Homo sapiens (Human).